Here is a 275-residue protein sequence, read N- to C-terminus: Elongation factor Ts (275 aa).

Positions 76–79 are involved in Mg(2+) ion dislocation from EF-Tu; it reads TDFV.

The protein belongs to the EF-Ts family.

The protein localises to the cytoplasm. In terms of biological role, associates with the EF-Tu.GDP complex and induces the exchange of GDP to GTP. It remains bound to the aminoacyl-tRNA.EF-Tu.GTP complex up to the GTP hydrolysis stage on the ribosome. The sequence is that of Elongation factor Ts from Nocardia farcinica (strain IFM 10152).